Reading from the N-terminus, the 268-residue chain is NADH-quinone oxidoreductase subunit B 1 (268 aa).

[4Fe-4S] cluster is bound by residues Cys42, Cys43, Cys108, and Cys138.

The protein belongs to the complex I 20 kDa subunit family. As to quaternary structure, NDH-1 is composed of 14 different subunits. Subunits NuoB, C, D, E, F, and G constitute the peripheral sector of the complex. [4Fe-4S] cluster serves as cofactor.

It localises to the cell membrane. It carries out the reaction a quinone + NADH + 5 H(+)(in) = a quinol + NAD(+) + 4 H(+)(out). NDH-1 shuttles electrons from NADH, via FMN and iron-sulfur (Fe-S) centers, to quinones in the respiratory chain. The immediate electron acceptor for the enzyme in this species is believed to be ubiquinone. Couples the redox reaction to proton translocation (for every two electrons transferred, four hydrogen ions are translocated across the cytoplasmic membrane), and thus conserves the redox energy in a proton gradient. This chain is NADH-quinone oxidoreductase subunit B 1, found in Roseiflexus sp. (strain RS-1).